The sequence spans 219 residues: ADP-sugar pyrophosphatase (219 aa).

Methionine 1 is subject to N-acetylmethionine. Phosphoserine occurs at positions 3 and 10. Tryptophan 28 is a binding site for substrate. Lysine 42 participates in a covalent cross-link: Glycyl lysine isopeptide (Lys-Gly) (interchain with G-Cter in SUMO2). A Phosphothreonine modification is found at threonine 45. Residues tryptophan 46–glutamate 47 and arginine 51 each bind substrate. One can recognise a Nudix hydrolase domain in the interval glutamine 57 to valine 197. Residue tyrosine 74 is modified to Phosphotyrosine. Arginine 84 lines the substrate pocket. A Mg(2+)-binding site is contributed by alanine 96. Positions glycine 97–glycine 118 match the Nudix box motif. Substrate is bound at residue leucine 98. Mg(2+) contacts are provided by glutamate 112 and glutamate 116. A substrate-binding site is contributed by aspartate 133. Glutamate 166 serves as a coordination point for Mg(2+). N6-acetyllysine occurs at positions 210 and 218.

This sequence belongs to the Nudix hydrolase family. As to quaternary structure, homodimer. Interacts with PARG. Mg(2+) is required as a cofactor. Post-translationally, phosphorylation at Thr-45 is required for homodimer stability; dephosphorylation results in destabilization of the homodimer. Dephosphorylation at Thr-45 promotes the ATP-synthesis activity. In terms of tissue distribution, widely expressed. Most abundant in liver.

It localises to the nucleus. The enzyme catalyses D-ribose 5-phosphate + ATP + H(+) = ADP-D-ribose + diphosphate. The catalysed reaction is ADP-D-ribose + H2O = D-ribose 5-phosphate + AMP + 2 H(+). It carries out the reaction 8-oxo-dGDP + H2O = 8-oxo-dGMP + phosphate + H(+). Enzyme that can either act as an ADP-sugar pyrophosphatase in absence of diphosphate or catalyze the synthesis of ATP in presence of diphosphate. In absence of diphosphate, hydrolyzes with similar activities various modified nucleoside diphosphates such as ADP-ribose, ADP-mannose, ADP-glucose, 8-oxo-GDP and 8-oxo-dGDP. Can also hydrolyze other nucleotide sugars with low activity. In presence of diphosphate, mediates the synthesis of ATP in the nucleus by catalyzing the conversion of ADP-ribose to ATP and ribose 5-phosphate. Nuclear ATP synthesis takes place when dephosphorylated at Thr-45. Nuclear ATP generation is required for extensive chromatin remodeling events that are energy-consuming. Does not play a role in U8 snoRNA decapping activity. Binds U8 snoRNA. This chain is ADP-sugar pyrophosphatase (NUDT5), found in Homo sapiens (Human).